Reading from the N-terminus, the 153-residue chain is Large ribosomal subunit protein uL15 (153 aa).

Belongs to the universal ribosomal protein uL15 family. In terms of assembly, part of the 50S ribosomal subunit.

Its function is as follows. Binds to the 23S rRNA. The chain is Large ribosomal subunit protein uL15 from Pelagibacter ubique (strain HTCC1062).